A 78-amino-acid polypeptide reads, in one-letter code: uncharacterized protein (78 aa).

2 helical membrane passes run Ile-7–Phe-27 and Leu-41–Phe-61.

It is found in the cell membrane. This is an uncharacterized protein from Bacillus subtilis (strain 168).